The following is a 78-amino-acid chain: Large ribosomal subunit protein bL28 (78 aa).

A disordered region spans residues 1-28 (MSAICQVTGRQPGYGKSVSHSHRRTSRR).

This sequence belongs to the bacterial ribosomal protein bL28 family.

The chain is Large ribosomal subunit protein bL28 from Corynebacterium diphtheriae (strain ATCC 700971 / NCTC 13129 / Biotype gravis).